A 72-amino-acid polypeptide reads, in one-letter code: uncharacterized protein (72 aa).

A helical transmembrane segment spans residues Val-33–Gly-53.

It localises to the membrane. This is an uncharacterized protein from Dictyostelium discoideum (Social amoeba).